The following is a 337-amino-acid chain: Glyceraldehyde-3-phosphate dehydrogenase (337 aa).

NAD(+) is bound by residues 12–13 (RI), Asp34, and Lys79. Residues 150–152 (SCT), Thr181, 210–211 (TG), and Arg233 each bind D-glyceraldehyde 3-phosphate. Cys151 functions as the Nucleophile in the catalytic mechanism. Asn315 lines the NAD(+) pocket.

This sequence belongs to the glyceraldehyde-3-phosphate dehydrogenase family. In terms of assembly, homotetramer. Expressed in all tissues examined.

The protein resides in the cytoplasm. It catalyses the reaction D-glyceraldehyde 3-phosphate + phosphate + NAD(+) = (2R)-3-phospho-glyceroyl phosphate + NADH + H(+). Its pathway is carbohydrate degradation; glycolysis; pyruvate from D-glyceraldehyde 3-phosphate: step 1/5. The sequence is that of Glyceraldehyde-3-phosphate dehydrogenase (gpd) from Lentinula edodes (Shiitake mushroom).